The sequence spans 663 residues: Bifunctional polymyxin resistance protein ArnA (663 aa).

Residues 1-307 (MSSKAVVFAY…ELGLVDGSVL (307 aa)) form a formyltransferase ArnAFT region. The Proton donor; for formyltransferase activity role is filled by His-106. Residues Arg-116 and 138-142 (VKRAD) each bind (6R)-10-formyltetrahydrofolate. Residues 317-663 (RRTRVLILGV…EAMLEIADKK (347 aa)) form a dehydrogenase ArnADH region. NAD(+) contacts are provided by residues Asp-350 and 371–372 (DI). Residues Ala-396, Tyr-401, and 435 to 436 (TS) contribute to the UDP-alpha-D-glucuronate site. The Proton acceptor; for decarboxylase activity role is filled by Glu-437. UDP-alpha-D-glucuronate-binding positions include Arg-463, Asn-494, 528-537 (RLFDGGEQKR), and Tyr-615. Arg-621 (proton donor; for decarboxylase activity) is an active-site residue.

The protein in the N-terminal section; belongs to the Fmt family. UDP-L-Ara4N formyltransferase subfamily. It in the C-terminal section; belongs to the NAD(P)-dependent epimerase/dehydratase family. UDP-glucuronic acid decarboxylase subfamily. In terms of assembly, homohexamer, formed by a dimer of trimers.

The enzyme catalyses UDP-alpha-D-glucuronate + NAD(+) = UDP-beta-L-threo-pentopyranos-4-ulose + CO2 + NADH. It catalyses the reaction UDP-4-amino-4-deoxy-beta-L-arabinose + (6R)-10-formyltetrahydrofolate = UDP-4-deoxy-4-formamido-beta-L-arabinose + (6S)-5,6,7,8-tetrahydrofolate + H(+). The protein operates within nucleotide-sugar biosynthesis; UDP-4-deoxy-4-formamido-beta-L-arabinose biosynthesis; UDP-4-deoxy-4-formamido-beta-L-arabinose from UDP-alpha-D-glucuronate: step 1/3. It functions in the pathway nucleotide-sugar biosynthesis; UDP-4-deoxy-4-formamido-beta-L-arabinose biosynthesis; UDP-4-deoxy-4-formamido-beta-L-arabinose from UDP-alpha-D-glucuronate: step 3/3. It participates in bacterial outer membrane biogenesis; lipopolysaccharide biosynthesis. Functionally, bifunctional enzyme that catalyzes the oxidative decarboxylation of UDP-glucuronic acid (UDP-GlcUA) to UDP-4-keto-arabinose (UDP-Ara4O) and the addition of a formyl group to UDP-4-amino-4-deoxy-L-arabinose (UDP-L-Ara4N) to form UDP-L-4-formamido-arabinose (UDP-L-Ara4FN). The modified arabinose is attached to lipid A and is required for resistance to polymyxin and cationic antimicrobial peptides. The sequence is that of Bifunctional polymyxin resistance protein ArnA from Pseudomonas fluorescens (strain SBW25).